The primary structure comprises 300 residues: Energy-coupling factor transporter ATP-binding protein EcfA2 (300 aa).

One can recognise an ABC transporter domain in the interval 3–258; the sequence is IKAKNIVKIY…NKFLIENKML (256 aa). 40–47 is an ATP binding site; it reads GQTGSGKT.

It belongs to the ABC transporter superfamily. Energy-coupling factor EcfA family. Forms a stable energy-coupling factor (ECF) transporter complex composed of 2 membrane-embedded substrate-binding proteins (S component), 2 ATP-binding proteins (A component) and 2 transmembrane proteins (T component).

The protein resides in the cell membrane. Functionally, ATP-binding (A) component of a common energy-coupling factor (ECF) ABC-transporter complex. Unlike classic ABC transporters this ECF transporter provides the energy necessary to transport a number of different substrates. The chain is Energy-coupling factor transporter ATP-binding protein EcfA2 from Mesomycoplasma hyopneumoniae (strain 7448) (Mycoplasma hyopneumoniae).